A 75-amino-acid polypeptide reads, in one-letter code: Small ribosomal subunit protein bS18 (75 aa).

It belongs to the bacterial ribosomal protein bS18 family. Part of the 30S ribosomal subunit. Forms a tight heterodimer with protein bS6.

Binds as a heterodimer with protein bS6 to the central domain of the 16S rRNA, where it helps stabilize the platform of the 30S subunit. This is Small ribosomal subunit protein bS18 from Thermotoga maritima (strain ATCC 43589 / DSM 3109 / JCM 10099 / NBRC 100826 / MSB8).